A 325-amino-acid polypeptide reads, in one-letter code: Polyprenyl transferase mpaA (325 aa).

The next 3 helical transmembrane spans lie at 27-47, 56-76, and 108-128; these read MPYY…ALKL, VEYI…LCGA, and VEAL…LDLI. N131 carries N-linked (GlcNAc...) asparagine glycosylation. The next 6 membrane-spanning stretches (helical) occupy residues 134 to 151, 159 to 179, 192 to 212, 240 to 260, 262 to 282, and 295 to 315; these read IWGL…YPYL, VFIY…ITGW, IFTH…YFNT, LFLA…VLKI, SPWL…MQIV, and IHWD…VEVG.

It belongs to the UbiA prenyltransferase family. Mg(2+) is required as a cofactor.

Its subcellular location is the golgi apparatus membrane. The enzyme catalyses 5,7-dihydroxy-4-methylphthalide + (2E,6E)-farnesyl diphosphate = 4-farnesyl-3,5-dihydroxy-6-methylphthalide + diphosphate. It functions in the pathway secondary metabolite biosynthesis; terpenoid biosynthesis. Functionally, polyprenyl transferase; part of the gene cluster that mediates the biosynthesis of mycophenolic acid (MPA), the first isolated antibiotic natural product in the world obtained from a culture of Penicillium brevicompactum in 1893. MpaA is a Golgi apparatus-associated enzyme that catalyzes the prenylation of 5,7-dihydroxy-4,6-dimethylphthalide (DHMP) to yield farnesyl-DHMP (FDHMP). The first step of the pathway is the synthesis of 5-methylorsellinic acid (5MOA) by the cytosolic polyketide synthase mpaC. 5MOA is then converted to the phthalide compound 5,7-dihydroxy-4,6-dimethylphthalide (DHMP) by the endoplasmic reticulum-bound cytochrome P450 monooxygenase mpaDE. MpaDE first catalyzes hydroxylation of 5-MOA to 4,6-dihydroxy-2-(hydroxymethyl)-3-methylbenzoic acid (DHMB). MpaDE then acts as a lactone synthase that catalyzes the ring closure to convert DHMB into DHMP. The next step is the prenylation of DHMP by the Golgi apparatus-associated prenyltransferase mpaA to yield farnesyl-DHMP (FDHMP). The ER-bound oxygenase mpaB then mediates the oxidative cleavage the C19-C20 double bond in FDHMP to yield FDHMP-3C via a mycophenolic aldehyde intermediate. The O-methyltransferase mpaG catalyzes the methylation of FDHMP-3C to yield MFDHMP-3C. After the cytosolic methylation of FDHMP-3C, MFDHMP-3C enters into peroxisomes probably via free diffusion due to its low molecular weight. Upon a peroxisomal CoA ligation reaction, catalyzed by a beta-oxidation component enzyme acyl-CoA ligase ACL891, MFDHMP-3C-CoA would then be restricted to peroxisomes for the following beta-oxidation pathway steps. The peroxisomal beta-oxidation machinery than converts MFDHMP-3C-CoA into MPA_CoA, via a beta-oxidation chain-shortening process. Finally mpaH acts as a peroxisomal acyl-CoA hydrolase with high substrate specificity toward MPA-CoA to release the final product MPA. This is Polyprenyl transferase mpaA from Penicillium roqueforti (strain FM164).